The chain runs to 419 residues: Serine hydroxymethyltransferase 2 (419 aa).

Residues Leu-120 and Gly-124–Leu-126 contribute to the (6S)-5,6,7,8-tetrahydrofolate site. An N6-(pyridoxal phosphate)lysine modification is found at Lys-229.

Belongs to the SHMT family. As to quaternary structure, homodimer. Pyridoxal 5'-phosphate serves as cofactor.

The protein localises to the cytoplasm. The enzyme catalyses (6R)-5,10-methylene-5,6,7,8-tetrahydrofolate + glycine + H2O = (6S)-5,6,7,8-tetrahydrofolate + L-serine. It functions in the pathway one-carbon metabolism; tetrahydrofolate interconversion. The protein operates within amino-acid biosynthesis; glycine biosynthesis; glycine from L-serine: step 1/1. Functionally, catalyzes the reversible interconversion of serine and glycine with tetrahydrofolate (THF) serving as the one-carbon carrier. This reaction serves as the major source of one-carbon groups required for the biosynthesis of purines, thymidylate, methionine, and other important biomolecules. Also exhibits THF-independent aldolase activity toward beta-hydroxyamino acids, producing glycine and aldehydes, via a retro-aldol mechanism. In Salmonella typhi, this protein is Serine hydroxymethyltransferase 2.